The following is a 315-amino-acid chain: Phage tubulin-like protein (315 aa).

GTP is bound by residues 13–14 (GT) and 93–95 (GSG).

It belongs to the FtsZ family. PhuZ subfamily. Homomultimer. Polymerizes in a strictly GTP-dependent manner.

The protein resides in the host cytoplasm. It carries out the reaction GTP + H2O = GDP + phosphate + H(+). Its activity is regulated as follows. The non-hydrolyzable GTP analog GMPCPP stabilizes filaments, which never disassemble. A tubulin-like GTPase that forms filaments, which are required for positioning viral DNA and capsids in the middle of the host cell for optimal replication. The motor component of a partition system which pushes phage DNA (encased by protein gp105) to the center of the bacterial host cell. Also required for movement of phage capsids to the vicinity of the DNA and rotation of the encased viral DNA at midcell. Forms filaments during the lytic phase, which position phage DNA at the center of the bacterial host cell. Filaments have a three-stranded intertwined architecture and form a spindle-like cytoskeleton within the infected cell. Has GTPase activity. Filaments grow at the plus end and depolymerize at the minus end, a process called treadmilling, and switch from growing in a polar manner to catastrophic depolymerization, i.e. they display dynamic instability, like tubulin. In infected host cells the filament ends close to the cell pole are relatively stable, while the other end near the phage DNA is highly dynamic. Both capsid movement and DNA rotation probably require treadmilling. The polypeptide is Phage tubulin-like protein (Pseudomonas aeruginosa (Pseudomonas aeruginosa phage PhiPA3)).